The primary structure comprises 476 residues: Methylenetetrahydrofolate--tRNA-(uracil-5-)-methyltransferase TrmFO (476 aa).

Position 14-19 (Gly-14–Gly-19) interacts with FAD. The disordered stretch occupies residues Leu-428–Ser-447. A compositionally biased stretch (basic and acidic residues) spans Ala-436 to Ser-447.

The protein belongs to the MnmG family. TrmFO subfamily. FAD is required as a cofactor.

Its subcellular location is the cytoplasm. The catalysed reaction is uridine(54) in tRNA + (6R)-5,10-methylene-5,6,7,8-tetrahydrofolate + NADH + H(+) = 5-methyluridine(54) in tRNA + (6S)-5,6,7,8-tetrahydrofolate + NAD(+). The enzyme catalyses uridine(54) in tRNA + (6R)-5,10-methylene-5,6,7,8-tetrahydrofolate + NADPH + H(+) = 5-methyluridine(54) in tRNA + (6S)-5,6,7,8-tetrahydrofolate + NADP(+). Its function is as follows. Catalyzes the folate-dependent formation of 5-methyl-uridine at position 54 (M-5-U54) in all tRNAs. This chain is Methylenetetrahydrofolate--tRNA-(uracil-5-)-methyltransferase TrmFO, found in Rhodopseudomonas palustris (strain BisA53).